Consider the following 812-residue polypeptide: Probable inorganic carbon transporter subunit DabA (812 aa).

Zn(2+) is bound by residues Cys-339, Asp-341, His-501, and Cys-516.

Belongs to the inorganic carbon transporter (TC 9.A.2) DabA family. Forms a complex with DabB. The cofactor is Zn(2+).

The protein localises to the cell inner membrane. Part of an energy-coupled inorganic carbon pump. The sequence is that of Probable inorganic carbon transporter subunit DabA from Xanthomonas axonopodis pv. citri (strain 306).